Here is a 565-residue protein sequence, read N- to C-terminus: CTP synthase (565 aa).

The segment at 1–272 (MARPKNVKHI…DLRVMKKLGL (272 aa)) is amidoligase domain. Ser-18 contributes to the CTP binding site. Residue Ser-18 participates in UTP binding. Residue 19–24 (SLGKGI) coordinates ATP. L-glutamine is bound at residue Tyr-59. Position 76 (Asp-76) interacts with ATP. 2 residues coordinate Mg(2+): Asp-76 and Glu-146. CTP-binding positions include 153–155 (DIE), 193–198 (KTKPTQ), and Lys-229. UTP-binding positions include 193 to 198 (KTKPTQ) and Lys-229. The Glutamine amidotransferase type-1 domain maps to 299-543 (TIGICGKYTE…VHAAKEFAQG (245 aa)). Gly-363 is an L-glutamine binding site. Cys-390 acts as the Nucleophile; for glutamine hydrolysis in catalysis. L-glutamine contacts are provided by residues 391-394 (LGMQ), Glu-414, and Arg-471. Residues His-516 and Glu-518 contribute to the active site.

This sequence belongs to the CTP synthase family. Homotetramer.

The enzyme catalyses UTP + L-glutamine + ATP + H2O = CTP + L-glutamate + ADP + phosphate + 2 H(+). It catalyses the reaction L-glutamine + H2O = L-glutamate + NH4(+). The catalysed reaction is UTP + NH4(+) + ATP = CTP + ADP + phosphate + 2 H(+). It participates in pyrimidine metabolism; CTP biosynthesis via de novo pathway; CTP from UDP: step 2/2. With respect to regulation, allosterically activated by GTP, when glutamine is the substrate; GTP has no effect on the reaction when ammonia is the substrate. The allosteric effector GTP functions by stabilizing the protein conformation that binds the tetrahedral intermediate(s) formed during glutamine hydrolysis. Inhibited by the product CTP, via allosteric rather than competitive inhibition. Its function is as follows. Catalyzes the ATP-dependent amination of UTP to CTP with either L-glutamine or ammonia as the source of nitrogen. Regulates intracellular CTP levels through interactions with the four ribonucleotide triphosphates. The protein is CTP synthase of Chlorobaculum tepidum (strain ATCC 49652 / DSM 12025 / NBRC 103806 / TLS) (Chlorobium tepidum).